A 579-amino-acid chain; its full sequence is MVLSEVWTALSGLSGVCLACSLLSAAVVLRWTRSQTARGAVTRARQKQRAGLETMDKAVQRFRLQNPDLDSEALLALPLLQLVQKLQSGELSPEAVLFTYLGKAWEVNKGTNCVTSYLTDCETQLSQAPRQGLLYGVPVSLKECFSYKGHASTLGLSLNEGVTSESDCVVVQVLKLQGAVPFVHTNVPQSMLSYDCSNPLFGQTMNPWKPSKSPGGSSGGEGALIGSGGSPLGLGTDIGGSIRFPSAFCGICGLKPTGNRLSKSGLKSCVYGQTAVQLSVGPMARDVDSLALCMKALLCEDLFRLDSTIPPLPFREEIYRSSRPLRVGYYETDNYTMPTPAMRRAVMETKQSLEAAGHTLVPFLPNNIPYALEVLSAGGLFSDGGCSFLQNFKGDFVDPCLGDLVLVLKLPRWFKKLLSFLLKPLFPRLAAFLNSMCPRSAEKLWELQHEIEMYRQSVIAQWKAMNLDVVLTPMLGPALDLNTPGRATGAISYTVLYNCLDFPAGVVPVTTVTAEDDAQMEHYKGYFGDMWDNILKKGMKKGIGLPVAVQCVALPWQEELCLRFMREVERLMTPEKRPS.

The helical transmembrane segment at 9-29 (ALSGLSGVCLACSLLSAAVVL) threads the bilayer. Residues 30 to 403 (RWTRSQTARG…GDFVDPCLGD (374 aa)) are Cytoplasmic-facing. Lysine 142 acts as the Charge relay system in catalysis. Substrate contacts are provided by residues methionine 191, serine 217, and 238-241 (IGGS). Serine 217 functions as the Charge relay system in the catalytic mechanism. Residue serine 241 is the Acyl-ester intermediate of the active site. A Phosphoserine modification is found at serine 241. The stretch at 404-433 (LVLVLKLPRWFKKLLSFLLKPLFPRLAAFL) is an intramembrane region. Topologically, residues 434–579 (NSMCPRSAEK…RLMTPEKRPS (146 aa)) are cytoplasmic.

Belongs to the amidase family. In terms of assembly, homodimer.

The protein resides in the endoplasmic reticulum membrane. It is found in the golgi apparatus membrane. It carries out the reaction N-(5Z,8Z,11Z,14Z-eicosatetraenoyl)-ethanolamine + H2O = ethanolamine + (5Z,8Z,11Z,14Z)-eicosatetraenoate. It catalyses the reaction (9Z)-octadecenamide + H2O = (9Z)-octadecenoate + NH4(+). The enzyme catalyses 2-(5Z,8Z,11Z,14Z-eicosatetraenoyl)-glycerol + H2O = glycerol + (5Z,8Z,11Z,14Z)-eicosatetraenoate + H(+). The catalysed reaction is N-(9Z-hexadecenoyl) ethanolamine + H2O = (9Z)-hexadecenoate + ethanolamine. It carries out the reaction N-(9Z-octadecenoyl) ethanolamine + H2O = ethanolamine + (9Z)-octadecenoate. It catalyses the reaction N-octadecanoyl ethanolamine + H2O = octadecanoate + ethanolamine. The enzyme catalyses N-docosanoyl-ethanolamine + H2O = docosanoate + ethanolamine. The catalysed reaction is N-tetracosanoyl-taurine + H2O = tetracosanoate + taurine. It carries out the reaction N-(15Z-tetracosenoyl)-ethanolamine + H2O = (15Z)-tetracosenoate + ethanolamine. It catalyses the reaction N-(9Z-octadecenoyl)-taurine + H2O = taurine + (9Z)-octadecenoate. The enzyme catalyses N-docosanoyl-taurine + H2O = docosanoate + taurine. The catalysed reaction is N-(15Z-tetracosenoyl)-taurine + H2O = (15Z)-tetracosenoate + taurine. It carries out the reaction N-tricosanoyl-taurine + H2O = tricosanoate + taurine. It catalyses the reaction (9Z,12Z,15Z)-octadecatrienamide + H2O = (9Z,12Z,15Z)-octadecatrienoate + NH4(+). The enzyme catalyses (5Z,8Z,11Z,14Z)-eicosatetraenamide + H2O = (5Z,8Z,11Z,14Z)-eicosatetraenoate + NH4(+). The catalysed reaction is (6Z)-octadecenamide + H2O = (6Z)-octadecenoate + NH4(+). It carries out the reaction (15Z)-tetracosenamide + H2O = (15Z)-tetracosenoate + NH4(+). It catalyses the reaction (8Z,11Z,14Z)-eicosatrienamide + H2O = (8Z,11Z,14Z)-eicosatrienoate + NH4(+). The enzyme catalyses (11Z,14Z,17Z)-eicosatrienamide + H2O = (11Z,14Z,17Z)-eicosatrienoate + NH4(+). The catalysed reaction is (11Z,14Z)-eicosadienamide + H2O = (11Z,14Z)-eicosadienoate + NH4(+). It carries out the reaction (9Z,12Z)-octadecadienamide + H2O = (9Z,12Z)-octadecadienoate + NH4(+). It catalyses the reaction tetradecamide + H2O = tetradecanoate + NH4(+). The enzyme catalyses 1-O-methyl-(5Z,8Z,11Z,14Z)-eicosatetraenoate + H2O = methanol + (5Z,8Z,11Z,14Z)-eicosatetraenoate + H(+). The catalysed reaction is (11Z)-eicosenamide + H2O = (11Z)-eicosenoate + NH4(+). It carries out the reaction (9Z)-octadecenoate + glycine = N-(9Z-octadecenoyl)glycine + H2O. It catalyses the reaction N-(5Z,8Z,11Z,14Z)-eicosatetraenoyl-glycine + H2O = (5Z,8Z,11Z,14Z)-eicosatetraenoate + glycine. The enzyme catalyses N-(5Z,8Z,11Z,14Z-eicosatetraenoyl)-L-serine + H2O = (5Z,8Z,11Z,14Z)-eicosatetraenoate + L-serine. Its activity is regulated as follows. Inhibited the trifluoromethyl compound PF-3845. In terms of biological role, catalyzes the hydrolysis of endogenous amidated lipids like the endocannabinoid anandamide (N-(5Z,8Z,11Z,14Z-eicosatetraenoyl)-ethanolamine), as well as other fatty amides such as the taurine-conjugated fatty acids (a structural class of central nervous system (CNS) metabolites), to their corresponding fatty acids, thereby regulating the signaling functions of these molecules. FAAH cooperates with PM20D1 in the hydrolysis of amino acid-conjugated fatty acids such as N-fatty acyl glycine and N-fatty acyl-L-serine, thereby acting as a physiological regulator of specific subsets of intracellular, but not of extracellular, N-fatty acyl amino acids. It can also catalyze the hydrolysis of the endocannabinoid 2-arachidonoylglycerol (2-(5Z,8Z,11Z,14Z-eicosatetraenoyl)-glycerol). The sequence is that of Fatty-acid amide hydrolase 1 (Faah) from Mus musculus (Mouse).